A 763-amino-acid chain; its full sequence is Exo-1,4-beta-xylosidase bxlB (763 aa).

An N-terminal signal peptide occupies residues 1 to 23; that stretch reads MAVFKSWNLALLSSLFIPALCQS. N-linked (GlcNAc...) asparagine glycosylation is present at N63. Residue D288 is part of the active site. N-linked (GlcNAc...) asparagine glycosylation is found at N340, N408, N419, N458, N621, and N760.

This sequence belongs to the glycosyl hydrolase 3 family.

It localises to the secreted. It carries out the reaction Hydrolysis of (1-&gt;4)-beta-D-xylans, to remove successive D-xylose residues from the non-reducing termini.. The protein operates within glycan degradation; xylan degradation. In terms of biological role, xylan 1,4-beta-xylosidase involved in the hydrolysis of xylan, a major structural heterogeneous polysaccharide found in plant biomass representing the second most abundant polysaccharide in the biosphere, after cellulose. Active against rye arabinoxylan and xylohexaose, but not paranitrophenyl-beta-xyloside. This chain is Exo-1,4-beta-xylosidase bxlB (bxlB), found in Emericella nidulans (strain FGSC A4 / ATCC 38163 / CBS 112.46 / NRRL 194 / M139) (Aspergillus nidulans).